The sequence spans 629 residues: Nicotinic receptor-associated protein 1 (629 aa).

2 C2 domains span residues 1-144 (MNQP…KAHL) and 162-299 (RTGS…ELLL). Residues aspartate 33, aspartate 39, aspartate 108, aspartate 110, aspartate 122, aspartate 192, aspartate 198, aspartate 254, aspartate 256, and aspartate 274 each contribute to the Ca(2+) site. A VWFA domain is found at 342-561 (EFAVAVDFTA…LDPDVVQENL (220 aa)). Disordered regions lie at residues 581–600 (GFQPRPVENPWTRNSPPPDY) and 607–629 (IGRRAQAPSPGFQMPVASAPPMY).

Belongs to the copine family. As to quaternary structure, interacts with nicotinic acetylcholine receptor. It depends on Ca(2+) as a cofactor.

It localises to the cell membrane. In terms of biological role, exhibits calcium-dependent phospholipid binding properties. May function in membrane trafficking. Regulates synaptic levels of nicotinic acetylcholine receptor subunit lev-1 and unc-38 in the nerve cord. Involved in nicotinic acetylcholine receptor (nAChR)-mediated sensitivity to nicotine and levamisole. Affects directional sperm motility. The polypeptide is Nicotinic receptor-associated protein 1 (Caenorhabditis briggsae).